Reading from the N-terminus, the 225-residue chain is UPF0758 protein SEQ_1136 (225 aa).

The 123-residue stretch at 102–224 (PVLSSAQVAE…YYSFREKSDL (123 aa)) folds into the MPN domain. Zn(2+) contacts are provided by histidine 173, histidine 175, and aspartate 186. The short motif at 173-186 (HNHPSGLTKPSAND) is the JAMM motif element.

Belongs to the UPF0758 family.

This Streptococcus equi subsp. equi (strain 4047) protein is UPF0758 protein SEQ_1136.